Here is a 505-residue protein sequence, read N- to C-terminus: Phase 1 flagellin (505 aa).

It belongs to the bacterial flagellin family.

The protein localises to the secreted. It localises to the bacterial flagellum. In terms of biological role, flagellin is the subunit protein which polymerizes to form the filaments of bacterial flagella. This is Phase 1 flagellin (fliC) from Salmonella naestved.